The chain runs to 148 residues: Snaclec 27 (148 aa).

The N-terminal stretch at 1–23 is a signal peptide; sequence WGDSSSSASACWSCFSLVSGIGA. 3 disulfide bridges follow: cysteine 27/cysteine 38, cysteine 55/cysteine 144, and cysteine 121/cysteine 136. A C-type lectin domain is found at 34-145; it reads HEGHCYKVFS…CSSTQQFVCK (112 aa).

Belongs to the snaclec family. Heterodimer; disulfide-linked. As to expression, expressed by the venom gland.

The protein resides in the secreted. In terms of biological role, interferes with one step of hemostasis (modulation of platelet aggregation, or coagulation cascade, for example). The protein is Snaclec 27 of Echis ocellatus (Ocellated saw-scaled viper).